A 598-amino-acid polypeptide reads, in one-letter code: Aspartate--tRNA(Asp/Asn) ligase (598 aa).

Glutamate 177 is a binding site for L-aspartate. Residues glutamine 201–lysine 204 form an aspartate region. Arginine 223 contributes to the L-aspartate binding site. ATP is bound by residues arginine 223–glutamate 225 and glutamine 232. Residue histidine 456 participates in L-aspartate binding. Glutamate 493 is an ATP binding site. Position 500 (arginine 500) interacts with L-aspartate. Residue glycine 545 to arginine 548 participates in ATP binding.

The protein belongs to the class-II aminoacyl-tRNA synthetase family. Type 1 subfamily. In terms of assembly, homodimer.

It is found in the cytoplasm. It carries out the reaction tRNA(Asx) + L-aspartate + ATP = L-aspartyl-tRNA(Asx) + AMP + diphosphate. Its function is as follows. Aspartyl-tRNA synthetase with relaxed tRNA specificity since it is able to aspartylate not only its cognate tRNA(Asp) but also tRNA(Asn). Reaction proceeds in two steps: L-aspartate is first activated by ATP to form Asp-AMP and then transferred to the acceptor end of tRNA(Asp/Asn). The chain is Aspartate--tRNA(Asp/Asn) ligase from Prochlorococcus marinus subsp. pastoris (strain CCMP1986 / NIES-2087 / MED4).